Consider the following 491-residue polypeptide: Ketol-acid reductoisomerase (NADP(+)) (491 aa).

Residues 15 to 208 (AQLGKCRFMG…GGHRAGVLES (194 aa)) form the KARI N-terminal Rossmann domain. NADP(+) contacts are provided by residues 45 to 48 (CGAQ), R68, R76, S78, and 108 to 110 (DKQ). Residue H132 is part of the active site. G158 is an NADP(+) binding site. 2 KARI C-terminal knotted domains span residues 209–344 (SFVA…TAPQ) and 345–484 (YEGK…MTDM). D217, E221, E389, and E393 together coordinate Mg(2+). S414 provides a ligand contact to substrate.

This sequence belongs to the ketol-acid reductoisomerase family. Requires Mg(2+) as cofactor.

It catalyses the reaction (2R)-2,3-dihydroxy-3-methylbutanoate + NADP(+) = (2S)-2-acetolactate + NADPH + H(+). The enzyme catalyses (2R,3R)-2,3-dihydroxy-3-methylpentanoate + NADP(+) = (S)-2-ethyl-2-hydroxy-3-oxobutanoate + NADPH + H(+). Its pathway is amino-acid biosynthesis; L-isoleucine biosynthesis; L-isoleucine from 2-oxobutanoate: step 2/4. It functions in the pathway amino-acid biosynthesis; L-valine biosynthesis; L-valine from pyruvate: step 2/4. Functionally, involved in the biosynthesis of branched-chain amino acids (BCAA). Catalyzes an alkyl-migration followed by a ketol-acid reduction of (S)-2-acetolactate (S2AL) to yield (R)-2,3-dihydroxy-isovalerate. In the isomerase reaction, S2AL is rearranged via a Mg-dependent methyl migration to produce 3-hydroxy-3-methyl-2-ketobutyrate (HMKB). In the reductase reaction, this 2-ketoacid undergoes a metal-dependent reduction by NADPH to yield (R)-2,3-dihydroxy-isovalerate. The sequence is that of Ketol-acid reductoisomerase (NADP(+)) from Shigella dysenteriae serotype 1 (strain Sd197).